A 1007-amino-acid chain; its full sequence is Aldehyde reductase lnbA (1007 aa).

Residues 35–428 (QVRQSPSSIA…GRVDHQIKVR (394 aa)) form an adenylation (A) domain region. The 78-residue stretch at 540-617 (TLCQDTQTVL…ALASIIDHAK (78 aa)) folds into the Carrier domain. Ser-577 is modified (O-(pantetheine 4'-phosphoryl)serine). Residues 659-998 (IFITGATGFV…PTLDCSLLKK (340 aa)) are short-chain dehydrogenase/reductase (R) domain.

It belongs to the NRP synthetase family.

The enzyme catalyses L-tyrosinal + AMP + diphosphate + NADP(+) = L-tyrosine + ATP + NADPH + H(+). It functions in the pathway secondary metabolite biosynthesis. In terms of biological role, non-canonical nonribosomal peptide synthetase; part of the lnb gene cluster that mediates the biosynthesis of diastereomeric piperazines. Lna and lnb clusters encode sets of enzymes that produce overlapping sets of previously undescribed metabolites such as piperazinomycin-like metabolites or morpholine. The lna and lnb biosynthetic pathways appear to be part of a signaling network that controls the formation of sclerotia, a resilient overwintering structure. One primary function of the non-canonical nonribosomal peptide synthetases lnaA and lnbA consists in the reduction of L-tyrosine. The presence in the clusters of tailoring enzymes such as the oxidoreductases lnaB, lnbB, lnaE or lnbE, as well as of the cytochrome P450 monooxygenases lnaC, lnaD, or lnbC, might explain formation of various diastereomeric piperazines. The chain is Aldehyde reductase lnbA from Aspergillus flavus (strain ATCC 200026 / FGSC A1120 / IAM 13836 / NRRL 3357 / JCM 12722 / SRRC 167).